A 277-amino-acid polypeptide reads, in one-letter code: UPF0276 protein PP_0992 (277 aa).

This sequence belongs to the UPF0276 family.

The sequence is that of UPF0276 protein PP_0992 from Pseudomonas putida (strain ATCC 47054 / DSM 6125 / CFBP 8728 / NCIMB 11950 / KT2440).